The sequence spans 246 residues: 2-aminoethylphosphonate cytidylyltransferase (246 aa).

The CMP-(2-aminoethyl)phosphonate site is built by Ala19, Gly20, Lys34, Ser97, Glu114, and Ala115. Mg(2+) is bound by residues Asp116 and Asp145. The CMP-(2-aminoethyl)phosphonate site is built by Asp145, Lys161, and Asp202. Residues Glu226 and Asp228 each coordinate Mg(2+).

This sequence belongs to the LicC/PntC cytidylyltransferase family. In terms of assembly, monomer. It depends on Mg(2+) as a cofactor.

The catalysed reaction is (2-aminoethyl)phosphonate + CTP = CMP-(2-aminoethyl)phosphonate + diphosphate. It participates in phosphorus metabolism; phosphonate biosynthesis. Functionally, cytidylyltransferase involved in the biosynthesis of cell-surface phosphonates. Catalyzes the activation of 2-aminoethylphosphonate (AEP) to CMP-2-aminoethylphosphonate (CMP-AEP). Can also use phosphocholine, with much lower efficiency. Exhibits strong activity towards CTP, limited activity towards ATP and no activity with GTP. The chain is 2-aminoethylphosphonate cytidylyltransferase from Lancefieldella rimae (strain ATCC 49626 / DSM 7090 / CCUG 31168 / NBRC 15546 / VPI D140H-11A) (Atopobium rimae).